Reading from the N-terminus, the 519-residue chain is Cytochrome P450 4A22 (519 aa).

Residues Met1–Ser4 constitute a propeptide that is removed on maturation. Residue Glu321 coordinates heme. Residue Ser440 is modified to Phosphoserine. Cys457 lines the heme pocket.

This sequence belongs to the cytochrome P450 family.

The protein resides in the endoplasmic reticulum membrane. It localises to the microsome membrane. The enzyme catalyses an omega-methyl-long-chain fatty acid + reduced [NADPH--hemoprotein reductase] + O2 = an omega-hydroxy-long-chain fatty acid + oxidized [NADPH--hemoprotein reductase] + H2O + H(+). Catalyzes the omega- and (omega-1)-hydroxylation of various fatty acids such as laurate and palmitate. Shows no activity towards arachidonic acid and prostaglandin A1. Lacks functional activity in the kidney and does not contribute to renal 20-hydroxyeicosatetraenoic acid (20-HETE) biosynthesis. This chain is Cytochrome P450 4A22 (CYP4A22), found in Homo sapiens (Human).